The chain runs to 89 residues: Small ribosomal subunit protein uS15 (89 aa).

The protein belongs to the universal ribosomal protein uS15 family. Part of the 30S ribosomal subunit. Forms a bridge to the 50S subunit in the 70S ribosome, contacting the 23S rRNA.

In terms of biological role, one of the primary rRNA binding proteins, it binds directly to 16S rRNA where it helps nucleate assembly of the platform of the 30S subunit by binding and bridging several RNA helices of the 16S rRNA. Forms an intersubunit bridge (bridge B4) with the 23S rRNA of the 50S subunit in the ribosome. In Bacteroides thetaiotaomicron (strain ATCC 29148 / DSM 2079 / JCM 5827 / CCUG 10774 / NCTC 10582 / VPI-5482 / E50), this protein is Small ribosomal subunit protein uS15.